A 227-amino-acid polypeptide reads, in one-letter code: Venom allergen 5 (227 aa).

A signal peptide spans 1–23 (MEISGLVYLIIIVTIIDLPYGKA). 4 cysteine pairs are disulfide-bonded: C27–C40, C31–C124, C49–C117, and C193–C210. The SCP domain occupies 68-212 (LKEHNDFRQK…WHYHYLVCNY (145 aa)).

It belongs to the CRISP family. Venom allergen 5-like subfamily. In terms of tissue distribution, expressed by the venom gland.

The protein localises to the secreted. This Vespula maculifrons (Eastern yellow jacket) protein is Venom allergen 5.